Reading from the N-terminus, the 602-residue chain is Exo-poly-alpha-D-galacturonosidase (602 aa).

The N-terminal stretch at 1–27 (MKVITFSRRSALASIVATCLMSTPALA) is a signal peptide. The Fibronectin type-III domain maps to 32 to 149 (APQKLQIPTL…TVTTTTTAVP (118 aa)). Catalysis depends on Asp395, which acts as the Proton donor. Residue His428 is part of the active site.

The protein belongs to the glycosyl hydrolase 28 family.

The protein localises to the secreted. It carries out the reaction [(1-&gt;4)-alpha-D-galacturonosyl](n) + H2O = alpha-D-galacturonosyl-(1-&gt;4)-D-galacturonate + [(1-&gt;4)-alpha-D-galacturonosyl](n-2). Contributes significantly to bacterial utilization of polygalacturonate and the induction of pectate lyase in the presence of extracellular pectic polymers. The sequence is that of Exo-poly-alpha-D-galacturonosidase (pehX) from Dickeya chrysanthemi (Pectobacterium chrysanthemi).